Reading from the N-terminus, the 318-residue chain is dTDP-6-deoxy-L-talose 4-dehydrogenase (NAD(P)(+)) (318 aa).

NAD(+) is bound by residues 19–20 (FI), 60–61 (DP), N95, T120, Y145, and K149. Substrate is bound by residues T120 and Y145. Y145 functions as the Proton acceptor in the catalytic mechanism.

This sequence belongs to the NAD(P)-dependent epimerase/dehydratase family.

It catalyses the reaction dTDP-6-deoxy-beta-L-talose + NAD(+) = dTDP-4-dehydro-beta-L-rhamnose + NADH + H(+). It carries out the reaction dTDP-6-deoxy-beta-L-talose + NADP(+) = dTDP-4-dehydro-beta-L-rhamnose + NADPH + H(+). In terms of biological role, catalyzes the reduction of dTDP-6-deoxy-L-lyxo-4-hexulose to dTDP-6-deoxy-L-talose. Can use NAD(+) or NADP(+). In Kitasatospora kifunensis (Streptomyces kifunensis), this protein is dTDP-6-deoxy-L-talose 4-dehydrogenase (NAD(P)(+)) (tal).